A 170-amino-acid polypeptide reads, in one-letter code: Protein SprT (170 aa).

The 145-residue stretch at arginine 19–arginine 163 folds into the SprT-like domain. A Zn(2+)-binding site is contributed by histidine 78. Glutamate 79 is a catalytic residue. Histidine 82 provides a ligand contact to Zn(2+).

Belongs to the SprT family. Requires Zn(2+) as cofactor.

The protein localises to the cytoplasm. This is Protein SprT from Erwinia tasmaniensis (strain DSM 17950 / CFBP 7177 / CIP 109463 / NCPPB 4357 / Et1/99).